The following is a 193-amino-acid chain: Ion-translocating oxidoreductase complex subunit A (193 aa).

The next 6 membrane-spanning stretches (helical) occupy residues 5–25 (LLLF…FLGL), 39–59 (IGMG…AWMV), 62–82 (FILL…LVIA), 102–122 (LLGI…VALL), 134–154 (AVYG…FAAI), and 171–191 (SIAL…TGLV).

This sequence belongs to the NqrDE/RnfAE family. In terms of assembly, the complex is composed of six subunits: RnfA, RnfB, RnfC, RnfD, RnfE and RnfG.

Its subcellular location is the cell inner membrane. In terms of biological role, part of a membrane-bound complex that couples electron transfer with translocation of ions across the membrane. The polypeptide is Ion-translocating oxidoreductase complex subunit A (Yersinia pestis (strain Pestoides F)).